Reading from the N-terminus, the 255-residue chain is Glycerol-3-phosphate regulon repressor (255 aa).

In terms of domain architecture, HTH deoR-type spans 3-58 (QSLRHQKIIKLVEQSGYLSTEELVAALDVSPQTIRRDLNILAELDLIRRHHGGAAS). Residues 20–39 (LSTEELVAALDVSPQTIRRD) constitute a DNA-binding region (H-T-H motif).

In terms of biological role, repressor of the glycerol-3-phosphate regulon. The polypeptide is Glycerol-3-phosphate regulon repressor (glpR) (Haemophilus influenzae (strain ATCC 51907 / DSM 11121 / KW20 / Rd)).